We begin with the raw amino-acid sequence, 342 residues long: MSKAYEQSGVNIHAGYEAVERMSSHVKRTMRKEVIGGLGGFGATFDLSQLNMTAPVLVSGTDGVGTKLKLAIDYGKHDSIGIDAVAMCVNDILTTGAEPLYFLDYIATNKVVPEVIEQIVKGISDACVETNTALIGGETAEMGEMYHEGEYDVAGFAVGAVEKDDYVDSSEVKEGQVVIGLASSGIHSNGYSLVRKLINESGIDLASNFDNRPFIDVFLEPTKLYVKPVLALKKEVSIKAMNHITGGGFYENIPRALPAGYAARIDTTSFPTPKIFDWLQQQGNIDTNEMYNIFNMGIGYTVIVDEKDASRALKILAEQNVEAYQIGHIMKNESTAIELLGV.

This sequence belongs to the AIR synthase family.

The protein resides in the cytoplasm. It catalyses the reaction 2-formamido-N(1)-(5-O-phospho-beta-D-ribosyl)acetamidine + ATP = 5-amino-1-(5-phospho-beta-D-ribosyl)imidazole + ADP + phosphate + H(+). Its pathway is purine metabolism; IMP biosynthesis via de novo pathway; 5-amino-1-(5-phospho-D-ribosyl)imidazole from N(2)-formyl-N(1)-(5-phospho-D-ribosyl)glycinamide: step 2/2. This chain is Phosphoribosylformylglycinamidine cyclo-ligase, found in Staphylococcus aureus (strain MSSA476).